Reading from the N-terminus, the 530-residue chain is Light-independent protochlorophyllide reductase subunit B (530 aa).

Asp36 contributes to the [4Fe-4S] cluster binding site. Asp287 functions as the Proton donor in the catalytic mechanism. A substrate-binding site is contributed by 422 to 423 (GL). The tract at residues 453-472 (PAVQTASSEPQPSAIETPSA) is disordered. Positions 454–463 (AVQTASSEPQ) are enriched in polar residues.

Belongs to the ChlB/BchB/BchZ family. Protochlorophyllide reductase is composed of three subunits; BchL, BchN and BchB. Forms a heterotetramer of two BchB and two BchN subunits. Requires [4Fe-4S] cluster as cofactor.

The catalysed reaction is chlorophyllide a + oxidized 2[4Fe-4S]-[ferredoxin] + 2 ADP + 2 phosphate = protochlorophyllide a + reduced 2[4Fe-4S]-[ferredoxin] + 2 ATP + 2 H2O. The protein operates within porphyrin-containing compound metabolism; bacteriochlorophyll biosynthesis (light-independent). Component of the dark-operative protochlorophyllide reductase (DPOR) that uses Mg-ATP and reduced ferredoxin to reduce ring D of protochlorophyllide (Pchlide) to form chlorophyllide a (Chlide). This reaction is light-independent. The NB-protein (BchN-BchB) is the catalytic component of the complex. This is Light-independent protochlorophyllide reductase subunit B from Rhodopseudomonas palustris (strain BisB18).